Reading from the N-terminus, the 401-residue chain is Nicotinate phosphoribosyltransferase (401 aa).

His-224 carries the phosphohistidine; by autocatalysis modification.

The protein belongs to the NAPRTase family. In terms of processing, transiently phosphorylated on a His residue during the reaction cycle. Phosphorylation strongly increases the affinity for substrates and increases the rate of nicotinate D-ribonucleotide production. Dephosphorylation regenerates the low-affinity form of the enzyme, leading to product release.

The enzyme catalyses nicotinate + 5-phospho-alpha-D-ribose 1-diphosphate + ATP + H2O = nicotinate beta-D-ribonucleotide + ADP + phosphate + diphosphate. The protein operates within cofactor biosynthesis; NAD(+) biosynthesis; nicotinate D-ribonucleotide from nicotinate: step 1/1. In terms of biological role, catalyzes the synthesis of beta-nicotinate D-ribonucleotide from nicotinate and 5-phospho-D-ribose 1-phosphate at the expense of ATP. This chain is Nicotinate phosphoribosyltransferase, found in Pseudomonas putida (strain GB-1).